The sequence spans 348 residues: Methylthioribose-1-phosphate isomerase (348 aa).

Residues 46–48 (RGA), Arg-88, and Gln-194 each bind substrate. Asp-235 functions as the Proton donor in the catalytic mechanism. Position 245-246 (245-246 (NK)) interacts with substrate.

This sequence belongs to the eIF-2B alpha/beta/delta subunits family. MtnA subfamily.

The catalysed reaction is 5-(methylsulfanyl)-alpha-D-ribose 1-phosphate = 5-(methylsulfanyl)-D-ribulose 1-phosphate. The protein operates within amino-acid biosynthesis; L-methionine biosynthesis via salvage pathway; L-methionine from S-methyl-5-thio-alpha-D-ribose 1-phosphate: step 1/6. Functionally, catalyzes the interconversion of methylthioribose-1-phosphate (MTR-1-P) into methylthioribulose-1-phosphate (MTRu-1-P). In Desulforudis audaxviator (strain MP104C), this protein is Methylthioribose-1-phosphate isomerase.